We begin with the raw amino-acid sequence, 133 residues long: Small ribosomal subunit protein bS6 (133 aa).

The protein belongs to the bacterial ribosomal protein bS6 family.

Binds together with bS18 to 16S ribosomal RNA. The sequence is that of Small ribosomal subunit protein bS6 from Chlorobium luteolum (strain DSM 273 / BCRC 81028 / 2530) (Pelodictyon luteolum).